Consider the following 121-residue polypeptide: Large ribosomal subunit protein bL20 (121 aa).

This sequence belongs to the bacterial ribosomal protein bL20 family.

Its function is as follows. Binds directly to 23S ribosomal RNA and is necessary for the in vitro assembly process of the 50S ribosomal subunit. It is not involved in the protein synthesizing functions of that subunit. This chain is Large ribosomal subunit protein bL20, found in Wolbachia sp. subsp. Drosophila simulans (strain wRi).